The primary structure comprises 460 residues: UDP-glucuronate 4-epimerase 6 (460 aa).

2 consecutive transmembrane segments (helical) span residues 41-61 and 111-131; these read ATLL…PPLS and GLSV…SLAL. 113-144 is a binding site for NAD(+); it reads SVLVTGAAGFVGSHCSLALRKRGDGVLGFDNF. Y263 serves as the catalytic Proton acceptor.

The protein belongs to the NAD(P)-dependent epimerase/dehydratase family. As to quaternary structure, homodimer. In terms of tissue distribution, in roots, leaf veins, siliques, flowers, pollen and stems.

The protein localises to the golgi apparatus. The protein resides in the golgi stack membrane. The catalysed reaction is UDP-alpha-D-glucuronate = UDP-alpha-D-galacturonate. In terms of biological role, involved in the synthesis of the negatively charged monosaccharide that forms the backbone of pectic cell wall components. In Arabidopsis thaliana (Mouse-ear cress), this protein is UDP-glucuronate 4-epimerase 6 (GAE6).